The chain runs to 238 residues: UDP-2,3-diacylglucosamine hydrolase (238 aa).

Residues Asp8, His10, Asp41, Asn78, and His113 each coordinate Mn(2+). Asn78–Arg79 provides a ligand contact to substrate. 5 residues coordinate substrate: Asp121, Ser159, Asn163, Lys166, and His194. Mn(2+) contacts are provided by His194 and His196.

Belongs to the LpxH family. Mn(2+) serves as cofactor.

It localises to the cell inner membrane. It carries out the reaction UDP-2-N,3-O-bis[(3R)-3-hydroxytetradecanoyl]-alpha-D-glucosamine + H2O = 2-N,3-O-bis[(3R)-3-hydroxytetradecanoyl]-alpha-D-glucosaminyl 1-phosphate + UMP + 2 H(+). It functions in the pathway glycolipid biosynthesis; lipid IV(A) biosynthesis; lipid IV(A) from (3R)-3-hydroxytetradecanoyl-[acyl-carrier-protein] and UDP-N-acetyl-alpha-D-glucosamine: step 4/6. Hydrolyzes the pyrophosphate bond of UDP-2,3-diacylglucosamine to yield 2,3-diacylglucosamine 1-phosphate (lipid X) and UMP by catalyzing the attack of water at the alpha-P atom. Involved in the biosynthesis of lipid A, a phosphorylated glycolipid that anchors the lipopolysaccharide to the outer membrane of the cell. The chain is UDP-2,3-diacylglucosamine hydrolase from Shewanella halifaxensis (strain HAW-EB4).